A 352-amino-acid chain; its full sequence is RNA 3'-terminal phosphate cyclase (352 aa).

Residues glutamine 102 and 292-296 each bind ATP; that span reads HMGDQ. The active-site Tele-AMP-histidine intermediate is histidine 318.

Belongs to the RNA 3'-terminal cyclase family. Type 1 subfamily.

It is found in the cytoplasm. The enzyme catalyses a 3'-end 3'-phospho-ribonucleotide-RNA + ATP = a 3'-end 2',3'-cyclophospho-ribonucleotide-RNA + AMP + diphosphate. Functionally, catalyzes the conversion of 3'-phosphate to a 2',3'-cyclic phosphodiester at the end of RNA. The mechanism of action of the enzyme occurs in 3 steps: (A) adenylation of the enzyme by ATP; (B) transfer of adenylate to an RNA-N3'P to produce RNA-N3'PP5'A; (C) and attack of the adjacent 2'-hydroxyl on the 3'-phosphorus in the diester linkage to produce the cyclic end product. The biological role of this enzyme is unknown but it is likely to function in some aspects of cellular RNA processing. This is RNA 3'-terminal phosphate cyclase from Methanopyrus kandleri (strain AV19 / DSM 6324 / JCM 9639 / NBRC 100938).